We begin with the raw amino-acid sequence, 69 residues long: Conotoxin reg3.6 (69 aa).

A signal peptide spans 1–20 (MMSKLGVLLTICLLLFPLSA). Residues 21–52 (LPLDGDQPADQPAERVQDISPDQNPLFHLVKR) constitute a propeptide that is removed on maturation. 3 cysteine pairs are disulfide-bonded: cysteine 54–cysteine 68, cysteine 55–cysteine 66, and cysteine 60–cysteine 69.

This sequence belongs to the conotoxin M superfamily. As to expression, expressed by the venom duct.

Its subcellular location is the secreted. This chain is Conotoxin reg3.6, found in Conus regius (Crown cone).